The following is a 142-amino-acid chain: Large ribosomal subunit protein uL13 (142 aa).

Belongs to the universal ribosomal protein uL13 family. As to quaternary structure, part of the 50S ribosomal subunit.

Its function is as follows. This protein is one of the early assembly proteins of the 50S ribosomal subunit, although it is not seen to bind rRNA by itself. It is important during the early stages of 50S assembly. This is Large ribosomal subunit protein uL13 from Dechloromonas aromatica (strain RCB).